Consider the following 293-residue polypeptide: Formamidopyrimidine-DNA glycosylase (293 aa).

Catalysis depends on Pro-2, which acts as the Schiff-base intermediate with DNA. The Proton donor role is filled by Glu-3. Lys-61 acts as the Proton donor; for beta-elimination activity in catalysis. Residues His-104, Arg-123, and Lys-169 each coordinate DNA. The FPG-type zinc finger occupies 255–289; it reads DAYGREGEPCRRCGAIMRRDKFMNRSSFYCPRCQP. Arg-279 (proton donor; for delta-elimination activity) is an active-site residue.

Belongs to the FPG family. In terms of assembly, monomer. It depends on Zn(2+) as a cofactor.

The catalysed reaction is Hydrolysis of DNA containing ring-opened 7-methylguanine residues, releasing 2,6-diamino-4-hydroxy-5-(N-methyl)formamidopyrimidine.. It catalyses the reaction 2'-deoxyribonucleotide-(2'-deoxyribose 5'-phosphate)-2'-deoxyribonucleotide-DNA = a 3'-end 2'-deoxyribonucleotide-(2,3-dehydro-2,3-deoxyribose 5'-phosphate)-DNA + a 5'-end 5'-phospho-2'-deoxyribonucleoside-DNA + H(+). Functionally, involved in base excision repair of DNA damaged by oxidation or by mutagenic agents. Acts as a DNA glycosylase that recognizes and removes damaged bases. Has a preference for oxidized purines, such as 7,8-dihydro-8-oxoguanine (8-oxoG). Has AP (apurinic/apyrimidinic) lyase activity and introduces nicks in the DNA strand. Cleaves the DNA backbone by beta-delta elimination to generate a single-strand break at the site of the removed base with both 3'- and 5'-phosphates. In Mycolicibacterium vanbaalenii (strain DSM 7251 / JCM 13017 / BCRC 16820 / KCTC 9966 / NRRL B-24157 / PYR-1) (Mycobacterium vanbaalenii), this protein is Formamidopyrimidine-DNA glycosylase.